Here is a 147-residue protein sequence, read N- to C-terminus: Nitric oxide reductase subunit C (147 aa).

The helical; Signal-anchor transmembrane segment at 13-29 threads the bilayer; the sequence is VFYGGSLFFIAVFVGLT. C59, C62, and H63 together coordinate heme c.

Heterodimer of cytochromes b (large subunit) and c (small subunit).

It localises to the cell membrane. Component of the anaerobic respiratory chain that transforms nitrate to dinitrogen (denitrification). The protein is Nitric oxide reductase subunit C (norC) of Cereibacter sphaeroides (strain ATCC 17025 / ATH 2.4.3) (Rhodobacter sphaeroides).